The following is a 468-amino-acid chain: Efflux pump azaK (468 aa).

Residues 1-30 (MTVHPPAVADETSPLLPSQDGPGHNGIVPA) are disordered. Transmembrane regions (helical) follow at residues 43–65 (QVAL…FPFV), 80–100 (VGFY…MLMI), 112–132 (KPVL…FGFS), 135–155 (LGQM…VVTV), 174–194 (YFSL…GALC), and 207–227 (LPTV…LMFV). A glycan (N-linked (GlcNAc...) asparagine) is linked at N228. 6 helical membrane-spanning segments follow: residues 257-277 (VLPV…YTAV), 296-316 (FYIS…LVLV), 329-349 (ILRG…GASV), 357-377 (VAFW…AMQL), 387-407 (VSPS…IISF), and 429-449 (PGFY…AFTL).

The protein belongs to the major facilitator superfamily.

The protein localises to the cell membrane. In terms of biological role, efflux pump that might be required for efficient secretion of azaphilones. The protein is Efflux pump azaK of Aspergillus niger (strain ATCC 1015 / CBS 113.46 / FGSC A1144 / LSHB Ac4 / NCTC 3858a / NRRL 328 / USDA 3528.7).